A 132-amino-acid chain; its full sequence is Small ribosomal subunit protein uS8 (132 aa).

The protein belongs to the universal ribosomal protein uS8 family. In terms of assembly, part of the 30S ribosomal subunit. Contacts proteins S5 and S12.

In terms of biological role, one of the primary rRNA binding proteins, it binds directly to 16S rRNA central domain where it helps coordinate assembly of the platform of the 30S subunit. This is Small ribosomal subunit protein uS8 from Clostridium kluyveri (strain NBRC 12016).